Here is a 545-residue protein sequence, read N- to C-terminus: Chaperonin GroEL (545 aa).

Residues 30–33 (TLGP), lysine 51, 87–91 (DGTTT), glycine 415, and aspartate 496 each bind ATP.

This sequence belongs to the chaperonin (HSP60) family. Forms a cylinder of 14 subunits composed of two heptameric rings stacked back-to-back. Interacts with the co-chaperonin GroES.

The protein localises to the cytoplasm. It carries out the reaction ATP + H2O + a folded polypeptide = ADP + phosphate + an unfolded polypeptide.. Its function is as follows. Together with its co-chaperonin GroES, plays an essential role in assisting protein folding. The GroEL-GroES system forms a nano-cage that allows encapsulation of the non-native substrate proteins and provides a physical environment optimized to promote and accelerate protein folding. The chain is Chaperonin GroEL from Rhodobacter capsulatus (Rhodopseudomonas capsulata).